A 152-amino-acid chain; its full sequence is Transcriptional repressor NrdR (152 aa).

The disordered stretch occupies residues 1–21 (MRCPFCGNGDTQVKDSRPTED). The segment at 3 to 34 (CPFCGNGDTQVKDSRPTEDSAAIRRRRFCPAC) is a zinc-finger region. Over residues 12-21 (QVKDSRPTED) the composition is skewed to basic and acidic residues. The ATP-cone domain maps to 49-139 (LVIVKKDGQR…VYRNFREAKD (91 aa)).

It belongs to the NrdR family. Zn(2+) is required as a cofactor.

Negatively regulates transcription of bacterial ribonucleotide reductase nrd genes and operons by binding to NrdR-boxes. The polypeptide is Transcriptional repressor NrdR (Rhodospirillum rubrum (strain ATCC 11170 / ATH 1.1.1 / DSM 467 / LMG 4362 / NCIMB 8255 / S1)).